The sequence spans 460 residues: MYLSVPHYPSLKFTAFQSHKRNFRVFAVATNEAANYLPEAPILIPDGPWKQIDGGVTAAKGFKAAGLYGGLRAKGEKPDLALVTCDVDAISAGAFTKNVVAAAPVLYCKKALDISETARAVLINAGQANAATGDAGYQDVIECVNNLSKILQIRPEEILVESTGVIGHRIKKDALLNSLPQLVRSLSSSVGGAASAAVAITTTDLVSKSVAIESQVGGSTIRIGGMAKGSGMIHPNMATMLGVVTTDAVVACDVWRKMVQISVDRSFNQITVDGDTSTNDTVIALSSGLSGFNSNIISSLKSREAGQLQECLDVVMQGLAKSIAWDGEGATCLIEITVSGASTEAEAAKVARSVAGSSLVKSAIYGRDPNWGRIAAAAGYAGVPFDQMKLKVSLGNILLMDGGEPQSFDRAAASNYLRRAGETHDTVRIFISIGDGQGEGRAWGCDLSYDYVKINAEYTT.

The N-terminal 26 residues, M1 to F26, are a transit peptide targeting the chloroplast. Residues T202, K228, T239, E328, N455, and T460 each coordinate substrate. T239 acts as the Nucleophile in catalysis.

This sequence belongs to the ArgJ family. As to quaternary structure, heterodimer of an alpha and a beta chain.

The protein resides in the plastid. The protein localises to the chloroplast. It carries out the reaction N(2)-acetyl-L-ornithine + L-glutamate = N-acetyl-L-glutamate + L-ornithine. The catalysed reaction is L-glutamate + acetyl-CoA = N-acetyl-L-glutamate + CoA + H(+). It functions in the pathway amino-acid biosynthesis; L-arginine biosynthesis; L-ornithine and N-acetyl-L-glutamate from L-glutamate and N(2)-acetyl-L-ornithine (cyclic): step 1/1. The protein operates within amino-acid biosynthesis; L-arginine biosynthesis; N(2)-acetyl-L-ornithine from L-glutamate: step 1/4. In terms of biological role, catalyzes two activities which are involved in the cyclic version of arginine biosynthesis: the synthesis of acetylglutamate from glutamate and acetyl-CoA, and of ornithine by transacetylation between acetylornithine and glutamate. The protein is Arginine biosynthesis bifunctional protein ArgJ, chloroplastic of Citrullus lanatus (Watermelon).